The following is a 412-amino-acid chain: MERIPSAQPPPACLPKAPGLEHGDLPGMYPAHMYQVYKSRRGIKRSEDSKETYKLPHRLIEKKRRDRINECIAQLKDLLPEHLKLTTLGHLEKAVVLELTLKHVKALTNLIDQQQQKIIALQSGLQAGELSGRNVETGQEMFCSGFQTCAREVLQYLAKHENTRDLKSSQLVTHLHRVVSELLQGGTSRKPSDPAPKVMDFKEKPSSPAKGSEGPGKNCVPVIQRTFAHSSGEQSGSDTDTDSGYGGESEKGDLRSEQPCFKSDHGRRFTMGERIGAIKQESEEPPTKKNRMQLSDDEGHFTSSDLISSPFLGPHPHQPPFCLPFYLIPPSATAYLPMLEKCWYPTSVPVLYPGLNASAAALSSFMNPDKISAPLLMPQRLPSPLPAHPSVDSSVLLQALKPIPPLNLETKD.

The segment at 1 to 139 (MERIPSAQPP…LSGRNVETGQ (139 aa)) is essential for interaction with BMAL1, E-box binding and repressor activity against the CLOCK-BMAL1 heterodimer. Residues 52–107 (TYKLPHRLIEKKRRDRINECIAQLKDLLPEHLKLTTLGHLEKAVVLELTLKHVKAL) form the bHLH domain. Residues 75 to 79 (LKDLL) form a necessary for interaction with RXRA and repressor activity against RXRA region. An Orange domain is found at 142–175 (FCSGFQTCAREVLQYLAKHENTRDLKSSQLVTHL). K159 participates in a covalent cross-link: Glycyl lysine isopeptide (Lys-Gly) (interchain with G-Cter in SUMO1, SUMO2 and SUMO3). Residue K167 forms a Glycyl lysine isopeptide (Lys-Gly) (interchain with G-Cter in SUMO2) linkage. Residues 182 to 303 (LLQGGTSRKP…LSDDEGHFTS (122 aa)) form a disordered region. S235 is subject to Phosphoserine. Residues 248–271 (ESEKGDLRSEQPCFKSDHGRRFTM) show a composition bias toward basic and acidic residues. A Glycyl lysine isopeptide (Lys-Gly) (interchain with G-Cter in SUMO1); alternate cross-link involves residue K279. K279 is covalently cross-linked (Glycyl lysine isopeptide (Lys-Gly) (interchain with G-Cter in SUMO1, SUMO2 and SUMO3); alternate). A Glycyl lysine isopeptide (Lys-Gly) (interchain with G-Cter in SUMO2); alternate cross-link involves residue K279. Residue K288 forms a Glycyl lysine isopeptide (Lys-Gly) (interchain with G-Cter in SUMO2) linkage. S383 carries the post-translational modification Phosphoserine.

Homodimer. Heterodimer with BHLHE41/DEC2. Interacts with TCF3/E47. Interacts with ubiquitin-conjugating enzyme UBE2I/UBC9. Interacts with HDAC1, SUMO1, RXRA and BMAL1. In terms of processing, ubiquitinated; which may lead to proteasomal degradation. Sumoylation inhibits its ubiquitination and promotes its negative regulation of the CLOCK-BMAL1 heterodimer transcriptional activator activity. Expressed in cartilage, spleen, intestine, lung, and to a lesser extent in heart, brain, liver, muscle and stomach.

It localises to the cytoplasm. Its subcellular location is the nucleus. Its function is as follows. Transcriptional repressor involved in the regulation of the circadian rhythm by negatively regulating the activity of the clock genes and clock-controlled genes. Acts as the negative limb of a novel autoregulatory feedback loop (DEC loop) which differs from the one formed by the PER and CRY transcriptional repressors (PER/CRY loop). Both these loops are interlocked as it represses the expression of PER1/2 and in turn is repressed by PER1/2 and CRY1/2. Represses the activity of the circadian transcriptional activator: CLOCK-BMAL1|BMAL2 heterodimer by competing for the binding to E-box elements (5'-CACGTG-3') found within the promoters of its target genes. Negatively regulates its own expression and the expression of DBP and BHLHE41/DEC2. Acts as a corepressor of RXR and the RXR-LXR heterodimers and represses the ligand-induced RXRA and NR1H3/LXRA transactivation activity. May be involved in the regulation of chondrocyte differentiation via the cAMP pathway. Represses the transcription of NR0B2 and attentuates the transactivation of NR0B2 by the CLOCK-BMAL1 complex. Drives the circadian rhythm of blood pressure through transcriptional repression of ATP1B1 in the cardiovascular system. This Homo sapiens (Human) protein is Class E basic helix-loop-helix protein 40 (BHLHE40).